The following is a 128-amino-acid chain: Holo-[acyl-carrier-protein] synthase (128 aa).

Mg(2+) contacts are provided by Asp-8 and Glu-58.

Belongs to the P-Pant transferase superfamily. AcpS family. The cofactor is Mg(2+).

The protein localises to the cytoplasm. It catalyses the reaction apo-[ACP] + CoA = holo-[ACP] + adenosine 3',5'-bisphosphate + H(+). Its function is as follows. Transfers the 4'-phosphopantetheine moiety from coenzyme A to a Ser of acyl-carrier-protein. This Exiguobacterium sibiricum (strain DSM 17290 / CCUG 55495 / CIP 109462 / JCM 13490 / 255-15) protein is Holo-[acyl-carrier-protein] synthase.